Here is a 154-residue protein sequence, read N- to C-terminus: UPF0178 protein in pahZ1 5'region (154 aa).

Belongs to the UPF0178 family.

The sequence is that of UPF0178 protein in pahZ1 5'region from Paucimonas lemoignei (Pseudomonas lemoignei).